The chain runs to 434 residues: Enolase (434 aa).

Histidine 158 and glutamate 167 together coordinate substrate. The Proton donor role is filled by glutamate 210. Residues aspartate 245, glutamate 294, and aspartate 319 each contribute to the Mg(2+) site. Positions 294 and 319 each coordinate substrate. Catalysis depends on lysine 344, which acts as the Proton acceptor. Substrate-binding positions include 371-374 (SHRS) and lysine 395.

The protein belongs to the enolase family. Homodimer. It depends on Mg(2+) as a cofactor.

The protein localises to the cytoplasm. It carries out the reaction (2R)-2-phosphoglycerate = phosphoenolpyruvate + H2O. It functions in the pathway carbohydrate degradation; glycolysis; pyruvate from D-glyceraldehyde 3-phosphate: step 4/5. This is Enolase from Doryteuthis pealeii (Longfin inshore squid).